A 360-amino-acid chain; its full sequence is Inward rectifier potassium channel 13 (360 aa).

Residues 1–50 are Cytoplasmic-facing; that stretch reads MESSNCKVITPLLSQRHRRMVTKDGHSTLQTDGAPRGLVYLRDAWGTLID. Residues 51 to 77 traverse the membrane as a helical segment; sequence MRWRWVMLVFSASFVLHWLVFAVLWYV. Residues 78–105 are Extracellular-facing; sequence LAEMNGDLELDHDAPPENHTICVKYITS. An intramembrane region (helical; Pore-forming) is located at residues 106–122; that stretch reads FTAAFSFSLETQLTIGY. The short motif at 119–124 is the Selectivity filter element; the sequence is TIGYGT. At 123–131 the chain is on the extracellular side; it reads GTMFPSGDC. Residues 132–157 traverse the membrane as a helical segment; the sequence is PSAIALLAIQMLLGLMLEAFITGAFV. Topologically, residues 158-360 are cytoplasmic; it reads AKIARPKNRA…FQISETGLTE (203 aa). Phosphoserine; by PKC is present on serine 201. Residue serine 287 is modified to Phosphoserine; by PKA.

Belongs to the inward rectifier-type potassium channel (TC 1.A.2.1) family. KCNJ13 subfamily. As to quaternary structure, homotetramer. Post-translationally, phosphorylation at Ser-201 by PKC strongly inhibits ionic currents, while phosphorylation at Ser-287 by PKA increases them.

The protein resides in the membrane. The protein localises to the cell membrane. It carries out the reaction K(+)(in) = K(+)(out). Inhibited by Ba(2+) and Cs(+), although sensitivity to those inhibitors is much lower than in other Kir channels. Inward rectifier potassium channels are characterized by a greater tendency to allow potassium to flow into the cell rather than out of it. Their voltage dependence is regulated by the concentration of extracellular potassium; as external potassium is raised, the voltage range of the channel opening shifts to more positive voltages. The inward rectification is mainly due to the blockage of outward current by internal magnesium. KCNJ13 has a very low single channel conductance, low sensitivity to block by external barium and cesium, and no dependence of its inward rectification properties on the internal blocking particle magnesium. This is Inward rectifier potassium channel 13 (KCNJ13) from Cavia porcellus (Guinea pig).